A 620-amino-acid chain; its full sequence is Arginine--tRNA ligase (620 aa).

The 'HIGH' region motif lies at 147-157 (ANPTGPIHIGG).

Belongs to the class-I aminoacyl-tRNA synthetase family. As to quaternary structure, monomer.

It localises to the cytoplasm. The catalysed reaction is tRNA(Arg) + L-arginine + ATP = L-arginyl-tRNA(Arg) + AMP + diphosphate. The polypeptide is Arginine--tRNA ligase (Bifidobacterium longum subsp. infantis (strain ATCC 15697 / DSM 20088 / JCM 1222 / NCTC 11817 / S12)).